The sequence spans 399 residues: 1-deoxy-D-xylulose 5-phosphate reductoisomerase (399 aa).

Positions 13, 14, 15, 16, and 127 each coordinate NADPH. Lysine 128 provides a ligand contact to 1-deoxy-D-xylulose 5-phosphate. Position 129 (glutamate 129) interacts with NADPH. Mn(2+) is bound at residue aspartate 153. The 1-deoxy-D-xylulose 5-phosphate site is built by serine 154, glutamate 155, serine 187, and histidine 210. Glutamate 155 lines the Mn(2+) pocket. NADPH is bound at residue glycine 216. Positions 223, 228, 229, and 232 each coordinate 1-deoxy-D-xylulose 5-phosphate. Glutamate 232 is a Mn(2+) binding site.

It belongs to the DXR family. Requires Mg(2+) as cofactor. Mn(2+) is required as a cofactor.

It carries out the reaction 2-C-methyl-D-erythritol 4-phosphate + NADP(+) = 1-deoxy-D-xylulose 5-phosphate + NADPH + H(+). It functions in the pathway isoprenoid biosynthesis; isopentenyl diphosphate biosynthesis via DXP pathway; isopentenyl diphosphate from 1-deoxy-D-xylulose 5-phosphate: step 1/6. Its function is as follows. Catalyzes the NADPH-dependent rearrangement and reduction of 1-deoxy-D-xylulose-5-phosphate (DXP) to 2-C-methyl-D-erythritol 4-phosphate (MEP). This chain is 1-deoxy-D-xylulose 5-phosphate reductoisomerase, found in Bordetella parapertussis (strain 12822 / ATCC BAA-587 / NCTC 13253).